The chain runs to 83 residues: Cytochrome b559 subunit alpha (83 aa).

The helical transmembrane segment at 21-35 (VIHSITIPSLFIAGW) threads the bilayer. A heme-binding site is contributed by His23.

Belongs to the PsbE/PsbF family. In terms of assembly, heterodimer of an alpha subunit and a beta subunit. PSII is composed of 1 copy each of membrane proteins PsbA, PsbB, PsbC, PsbD, PsbE, PsbF, PsbH, PsbI, PsbJ, PsbK, PsbL, PsbM, PsbT, PsbX, PsbY, PsbZ, Psb30/Ycf12, at least 3 peripheral proteins of the oxygen-evolving complex and a large number of cofactors. It forms dimeric complexes. Heme b is required as a cofactor.

It is found in the plastid. The protein localises to the chloroplast thylakoid membrane. Its function is as follows. This b-type cytochrome is tightly associated with the reaction center of photosystem II (PSII). PSII is a light-driven water:plastoquinone oxidoreductase that uses light energy to abstract electrons from H(2)O, generating O(2) and a proton gradient subsequently used for ATP formation. It consists of a core antenna complex that captures photons, and an electron transfer chain that converts photonic excitation into a charge separation. This is Cytochrome b559 subunit alpha from Phalaenopsis aphrodite subsp. formosana (Moth orchid).